We begin with the raw amino-acid sequence, 351 residues long: MPCDTADNWARYEGQDNAIMVARRGSVNSAFVTNSSQYHQAEDTNGNCFINARNDNWDNRDCNACVGHSDFSIDGVIGSGGFGSVFLGRYCGRRVAVKSVRQCSRNKEASRQSFQAEFNALLLRHDNIVSVLATTAYEDFDSGAFIIMEYAGRNLQQIVNDPGSSLSPTRRTKYALHIIRALHYTHSQGIAHLDVKPANVIVDSNTDVCRLADFGCSQRVSEGEGRDSFTSRSYLTGTFAYRAPELLRGRPPTTKADIYSYGVTLWQMLTRETPFAGENHHVVIFGVVAQNLRPSLPENANDAWYESLVTRCWEGRVADRPSAAEILLALERRTDDTENLPRDLKRRHGTT.

Residues 71–340 enclose the Protein kinase domain; that stretch reads FSIDGVIGSG…ERRTDDTENL (270 aa). Residues 77 to 85 and K98 each bind ATP; that span reads IGSGGFGSV. Residue D194 is the Proton acceptor of the active site.

It belongs to the protein kinase superfamily. Ser/Thr protein kinase family.

The enzyme catalyses L-seryl-[protein] + ATP = O-phospho-L-seryl-[protein] + ADP + H(+). It catalyses the reaction L-threonyl-[protein] + ATP = O-phospho-L-threonyl-[protein] + ADP + H(+). Suppresses the mitotic cell cycle in oocytes, forcing them to undergo meiosis II to produce haploid gametes. Acts as a MAPK kinase kinase (MAP3K) that acts upstream of MAP kinase in oocytes. This chain is Serine/threonine-protein kinase mos, found in Patiria pectinifera (Starfish).